Consider the following 813-residue polypeptide: LPS-assembly protein LptD (813 aa).

The disordered stretch occupies residues 1–29 (MTEQRRSPNNRALPSPAPTSVPARARRAG). Residues 1-52 (MTEQRRSPNNRALPSPAPTSVPARARRAGGLHAGALRPLVLAMASLSAGAHA) form the signal peptide.

Belongs to the LptD family. Component of the lipopolysaccharide transport and assembly complex. Interacts with LptE and LptA.

The protein resides in the cell outer membrane. In terms of biological role, together with LptE, is involved in the assembly of lipopolysaccharide (LPS) at the surface of the outer membrane. This Cupriavidus necator (strain ATCC 17699 / DSM 428 / KCTC 22496 / NCIMB 10442 / H16 / Stanier 337) (Ralstonia eutropha) protein is LPS-assembly protein LptD.